A 602-amino-acid polypeptide reads, in one-letter code: Aspartate--tRNA(Asp/Asn) ligase (602 aa).

L-aspartate is bound at residue Glu176. Positions 200 to 203 (QQFK) are aspartate. Positions 222 and 452 each coordinate L-aspartate. Residue 222-224 (RDE) coordinates ATP. Glu490 serves as a coordination point for ATP. L-aspartate is bound at residue Arg497. 542-545 (GIDR) contacts ATP.

It belongs to the class-II aminoacyl-tRNA synthetase family. Type 1 subfamily. As to quaternary structure, homodimer.

It is found in the cytoplasm. It carries out the reaction tRNA(Asx) + L-aspartate + ATP = L-aspartyl-tRNA(Asx) + AMP + diphosphate. In terms of biological role, aspartyl-tRNA synthetase with relaxed tRNA specificity since it is able to aspartylate not only its cognate tRNA(Asp) but also tRNA(Asn). Reaction proceeds in two steps: L-aspartate is first activated by ATP to form Asp-AMP and then transferred to the acceptor end of tRNA(Asp/Asn). In Rickettsia conorii (strain ATCC VR-613 / Malish 7), this protein is Aspartate--tRNA(Asp/Asn) ligase.